The chain runs to 445 residues: UDP-N-acetylglucosamine--peptide N-acetylglucosaminyltransferase stabilizing protein GtfB (445 aa).

Residues 55–171 (KPLYFNQVPV…TLPGQSMRYF (117 aa)) form a glycosyltransferase 1 region.

Belongs to the GtfB family. In terms of assembly, interacts with glycosyltransferase GtfA; probably forms a heterotetramer with 2 subunits each of GtfA and GtfB. Part of the accessory SecA2/SecY2 protein translocation apparatus.

Its subcellular location is the cell membrane. It participates in protein modification; protein glycosylation. Functionally, required for the polymorphic O-glycosylation of the serine-rich repeat protein PsrP. A stabilizing protein that is part of the accessory SecA2/SecY2 system specifically required to export serine-rich repeat cell wall proteins encoded upstream in the same operon. The GtfA-GtfB complex adds GlcNAc from UDP-GlcNAc to PsrP, attaching the first sugar residue. Stabilizes the glycosylation activity of GtfA. Has no N-acetylglucosaminyl transferase activity on its own. The sequence is that of UDP-N-acetylglucosamine--peptide N-acetylglucosaminyltransferase stabilizing protein GtfB from Streptococcus pneumoniae serotype 4 (strain ATCC BAA-334 / TIGR4).